Reading from the N-terminus, the 327-residue chain is 1-aminocyclopropane-1-carboxylate oxidase 1 (327 aa).

The Fe2OG dioxygenase domain occupies 157–257 (PTFGTKVSNY…RMSIASFYNP (101 aa)). Fe cation contacts are provided by His181, Asp183, and His238.

The protein belongs to the iron/ascorbate-dependent oxidoreductase family. It depends on Fe cation as a cofactor.

The enzyme catalyses 1-aminocyclopropane-1-carboxylate + L-ascorbate + O2 = ethene + L-dehydroascorbate + hydrogen cyanide + CO2 + 2 H2O. It functions in the pathway alkene biosynthesis; ethylene biosynthesis via S-adenosyl-L-methionine; ethylene from S-adenosyl-L-methionine: step 2/2. The sequence is that of 1-aminocyclopropane-1-carboxylate oxidase 1 (ACO1) from Doritaenopsis sp. (Moth orchid).